We begin with the raw amino-acid sequence, 492 residues long: NADH-quinone oxidoreductase subunit N (492 aa).

14 consecutive transmembrane segments (helical) span residues 12 to 32 (LLPYAPIIAVVITVLVVMIAI), 44 to 64 (ISVVGLNIGLFILLGQMAGII), 76 to 96 (LFVIDNFAQFNMVIIFICALA), 115 to 135 (LYLLMLLSTVGALLMVCAQHL), 138 to 158 (FFMSLEMLSIPLYGMLSYTYM), 169 to 189 (YLVLSATASATLLMGMAFIYA), 212 to 232 (LILGAAMMMFGIAFKLSAAPF), 244 to 264 (PAPIATYLASVSKVAMMALAV), 272 to 292 (LLALPSVQMLLMVMATLSILL), 306 to 326 (LLGYSSIAHMGYVLIVIVSIG), 334 to 354 (SMYMAIYAFTSIGAFGVVTLM), 381 to 401 (TAVMTIMMLSLAGIPLTAGFI), 416 to 438 (WFLAAMIILGSAIGLFYYLRVLL), and 463 to 483 (IMVIAVTAIIVFFGVLPNSMI).

This sequence belongs to the complex I subunit 2 family. As to quaternary structure, NDH-1 is composed of 14 different subunits. Subunits NuoA, H, J, K, L, M, N constitute the membrane sector of the complex.

The protein localises to the cell inner membrane. The enzyme catalyses a quinone + NADH + 5 H(+)(in) = a quinol + NAD(+) + 4 H(+)(out). Its function is as follows. NDH-1 shuttles electrons from NADH, via FMN and iron-sulfur (Fe-S) centers, to quinones in the respiratory chain. The immediate electron acceptor for the enzyme in this species is believed to be ubiquinone. Couples the redox reaction to proton translocation (for every two electrons transferred, four hydrogen ions are translocated across the cytoplasmic membrane), and thus conserves the redox energy in a proton gradient. This Psychrobacter arcticus (strain DSM 17307 / VKM B-2377 / 273-4) protein is NADH-quinone oxidoreductase subunit N.